Consider the following 120-residue polypeptide: ESAT-6-like protein EsxQ (120 aa).

It belongs to the WXG100 family. ESAT-6 subfamily.

It is found in the secreted. The polypeptide is ESAT-6-like protein EsxQ (Mycobacterium bovis (strain ATCC BAA-935 / AF2122/97)).